The sequence spans 134 residues: Large ribosomal subunit protein bL19 (134 aa).

Residues 108 to 134 (KSARIVERSDRSDKAKAQKAAAATAAE) are disordered. Basic and acidic residues predominate over residues 111–123 (RIVERSDRSDKAK). Low complexity predominate over residues 125 to 134 (QKAAAATAAE).

Belongs to the bacterial ribosomal protein bL19 family.

This protein is located at the 30S-50S ribosomal subunit interface and may play a role in the structure and function of the aminoacyl-tRNA binding site. The sequence is that of Large ribosomal subunit protein bL19 from Methylorubrum extorquens (strain PA1) (Methylobacterium extorquens).